The following is a 94-amino-acid chain: Putative pterin-4-alpha-carbinolamine dehydratase (94 aa).

Belongs to the pterin-4-alpha-carbinolamine dehydratase family.

It catalyses the reaction (4aS,6R)-4a-hydroxy-L-erythro-5,6,7,8-tetrahydrobiopterin = (6R)-L-erythro-6,7-dihydrobiopterin + H2O. The protein is Putative pterin-4-alpha-carbinolamine dehydratase of Chloroflexus aggregans (strain MD-66 / DSM 9485).